Reading from the N-terminus, the 211-residue chain is SsrA-binding protein (211 aa).

2 disordered regions span residues 1–20 and 170–211; these read MHRR…PERS and RLRR…RHEN. The span at 177–187 shows a compositional bias: polar residues; sequence QRNTQRSVTPR.

Belongs to the SmpB family.

The protein resides in the cytoplasm. Its function is as follows. Required for rescue of stalled ribosomes mediated by trans-translation. Binds to transfer-messenger RNA (tmRNA), required for stable association of tmRNA with ribosomes. tmRNA and SmpB together mimic tRNA shape, replacing the anticodon stem-loop with SmpB. tmRNA is encoded by the ssrA gene; the 2 termini fold to resemble tRNA(Ala) and it encodes a 'tag peptide', a short internal open reading frame. During trans-translation Ala-aminoacylated tmRNA acts like a tRNA, entering the A-site of stalled ribosomes, displacing the stalled mRNA. The ribosome then switches to translate the ORF on the tmRNA; the nascent peptide is terminated with the 'tag peptide' encoded by the tmRNA and targeted for degradation. The ribosome is freed to recommence translation, which seems to be the essential function of trans-translation. This chain is SsrA-binding protein, found in Tropheryma whipplei (strain TW08/27) (Whipple's bacillus).